Reading from the N-terminus, the 509-residue chain is Lanosterol 14-alpha demethylase (509 aa).

The helical transmembrane segment at 30 to 50 (GNLLSMLLIACAFTLSLVYLF) threads the bilayer. A heme-binding site is contributed by Cys-455.

This sequence belongs to the cytochrome P450 family. Heme is required as a cofactor. Post-translationally, ubiquitinated by MARCHF6, leading to proteasomal degradation.

It is found in the endoplasmic reticulum membrane. The protein localises to the microsome membrane. The enzyme catalyses a 14alpha-methyl steroid + 3 reduced [NADPH--hemoprotein reductase] + 3 O2 = a Delta(14) steroid + formate + 3 oxidized [NADPH--hemoprotein reductase] + 4 H2O + 4 H(+). The catalysed reaction is lanosterol + 3 reduced [NADPH--hemoprotein reductase] + 3 O2 = 4,4-dimethyl-5alpha-cholesta-8,14,24-trien-3beta-ol + formate + 3 oxidized [NADPH--hemoprotein reductase] + 4 H2O + 4 H(+). It carries out the reaction 24,25-dihydrolanosterol + 3 reduced [NADPH--hemoprotein reductase] + 3 O2 = 4,4-dimethyl-8,14-cholestadien-3beta-ol + formate + 3 oxidized [NADPH--hemoprotein reductase] + 4 H2O + 4 H(+). It catalyses the reaction a 14alpha-methyl steroid + reduced [NADPH--hemoprotein reductase] + O2 = a 14alpha-hydroxymethyl steroid + oxidized [NADPH--hemoprotein reductase] + H2O + H(+). The enzyme catalyses a 14alpha-hydroxymethyl steroid + reduced [NADPH--hemoprotein reductase] + O2 = a 14alpha-formyl steroid + oxidized [NADPH--hemoprotein reductase] + 2 H2O + H(+). The catalysed reaction is a 14alpha-formyl steroid + reduced [NADPH--hemoprotein reductase] + O2 = a Delta(14) steroid + formate + oxidized [NADPH--hemoprotein reductase] + H2O + 2 H(+). It carries out the reaction lanosterol + reduced [NADPH--hemoprotein reductase] + O2 = 32-hydroxylanosterol + oxidized [NADPH--hemoprotein reductase] + H2O + H(+). It catalyses the reaction 32-hydroxylanosterol + reduced [NADPH--hemoprotein reductase] + O2 = 32-oxolanosterol + oxidized [NADPH--hemoprotein reductase] + 2 H2O + H(+). The enzyme catalyses 32-oxolanosterol + reduced [NADPH--hemoprotein reductase] + O2 = 4,4-dimethyl-5alpha-cholesta-8,14,24-trien-3beta-ol + formate + oxidized [NADPH--hemoprotein reductase] + H2O + 2 H(+). The catalysed reaction is 24,25-dihydrolanosterol + reduced [NADPH--hemoprotein reductase] + O2 = 32-hydroxy-24,25-dihydrolanosterol + oxidized [NADPH--hemoprotein reductase] + H2O + H(+). It carries out the reaction 32-hydroxy-24,25-dihydrolanosterol + reduced [NADPH--hemoprotein reductase] + O2 = 32-oxo-24,25-dihydrolanosterol + oxidized [NADPH--hemoprotein reductase] + 2 H2O + H(+). It catalyses the reaction 32-oxo-24,25-dihydrolanosterol + reduced [NADPH--hemoprotein reductase] + O2 = 4,4-dimethyl-8,14-cholestadien-3beta-ol + formate + oxidized [NADPH--hemoprotein reductase] + H2O + 2 H(+). The protein operates within steroid biosynthesis; zymosterol biosynthesis; zymosterol from lanosterol: step 1/6. Its activity is regulated as follows. Inhibited by azalanstat. Inhibited by azole antifungal agents ketoconazole, itraconazole and fluconazole. Functionally, sterol 14alpha-demethylase that plays a critical role in the cholesterol biosynthesis pathway, being cholesterol the major sterol component in mammalian membranes as well as a precursor for bile acid and steroid hormone synthesis. Cytochrome P450 monooxygenase that catalyzes the three-step oxidative removal of the 14alpha-methyl group (C-32) of sterols such as lanosterol (lanosta-8,24-dien-3beta-ol) and 24,25-dihydrolanosterol (DHL) in the form of formate, and converts the sterols to 4,4-dimethyl-5alpha-cholesta-8,14,24-trien-3beta-ol and 4,4-dimethyl-8,14-cholestadien-3beta-ol, respectively, which are intermediates of cholesterol biosynthesis. Can also demethylate substrates not intrinsic to mammals, such as eburicol (24-methylene-24,25-dihydrolanosterol), but at a lower rate than DHL. This chain is Lanosterol 14-alpha demethylase, found in Macaca fascicularis (Crab-eating macaque).